Consider the following 315-residue polypeptide: Mannose-6-phosphate isomerase ManA (315 aa).

Zn(2+) is bound by residues His97, Glu115, and His172. Arg192 is an active-site residue.

Belongs to the mannose-6-phosphate isomerase type 1 family. Zn(2+) serves as cofactor.

The enzyme catalyses D-mannose 6-phosphate = D-fructose 6-phosphate. This is Mannose-6-phosphate isomerase ManA (manA) from Bacillus subtilis (strain 168).